A 166-amino-acid polypeptide reads, in one-letter code: Crossover junction endodeoxyribonuclease RuvC (166 aa).

Active-site residues include D7, E67, and D140. The Mg(2+) site is built by D7, E67, and D140.

The protein belongs to the RuvC family. In terms of assembly, homodimer which binds Holliday junction (HJ) DNA. The HJ becomes 2-fold symmetrical on binding to RuvC with unstacked arms; it has a different conformation from HJ DNA in complex with RuvA. In the full resolvosome a probable DNA-RuvA(4)-RuvB(12)-RuvC(2) complex forms which resolves the HJ. Mg(2+) serves as cofactor.

The protein localises to the cytoplasm. It catalyses the reaction Endonucleolytic cleavage at a junction such as a reciprocal single-stranded crossover between two homologous DNA duplexes (Holliday junction).. Functionally, the RuvA-RuvB-RuvC complex processes Holliday junction (HJ) DNA during genetic recombination and DNA repair. Endonuclease that resolves HJ intermediates. Cleaves cruciform DNA by making single-stranded nicks across the HJ at symmetrical positions within the homologous arms, yielding a 5'-phosphate and a 3'-hydroxyl group; requires a central core of homology in the junction. The consensus cleavage sequence is 5'-(A/T)TT(C/G)-3'. Cleavage occurs on the 3'-side of the TT dinucleotide at the point of strand exchange. HJ branch migration catalyzed by RuvA-RuvB allows RuvC to scan DNA until it finds its consensus sequence, where it cleaves and resolves the cruciform DNA. In Brevibacillus brevis (strain 47 / JCM 6285 / NBRC 100599), this protein is Crossover junction endodeoxyribonuclease RuvC.